We begin with the raw amino-acid sequence, 255 residues long: Indole-3-glycerol phosphate synthase (255 aa).

The protein belongs to the TrpC family.

It carries out the reaction 1-(2-carboxyphenylamino)-1-deoxy-D-ribulose 5-phosphate + H(+) = (1S,2R)-1-C-(indol-3-yl)glycerol 3-phosphate + CO2 + H2O. The protein operates within amino-acid biosynthesis; L-tryptophan biosynthesis; L-tryptophan from chorismate: step 4/5. The polypeptide is Indole-3-glycerol phosphate synthase (Streptococcus pneumoniae serotype 19F (strain G54)).